The following is a 299-amino-acid chain: Coenzyme PQQ synthesis protein B (299 aa).

The protein belongs to the PqqB family.

It functions in the pathway cofactor biosynthesis; pyrroloquinoline quinone biosynthesis. Its function is as follows. May be involved in the transport of PQQ or its precursor to the periplasm. The polypeptide is Coenzyme PQQ synthesis protein B (Methylobacterium sp. (strain 4-46)).